Here is a 635-residue protein sequence, read N- to C-terminus: Threonine--tRNA ligase (635 aa).

The region spanning Met-1–Thr-61 is the TGS domain. The tract at residues Asp-242 to Pro-533 is catalytic. Positions 333, 384, and 510 each coordinate Zn(2+).

This sequence belongs to the class-II aminoacyl-tRNA synthetase family. As to quaternary structure, homodimer. It depends on Zn(2+) as a cofactor.

The protein resides in the cytoplasm. It catalyses the reaction tRNA(Thr) + L-threonine + ATP = L-threonyl-tRNA(Thr) + AMP + diphosphate + H(+). Functionally, catalyzes the attachment of threonine to tRNA(Thr) in a two-step reaction: L-threonine is first activated by ATP to form Thr-AMP and then transferred to the acceptor end of tRNA(Thr). Also edits incorrectly charged L-seryl-tRNA(Thr). The sequence is that of Threonine--tRNA ligase from Cupriavidus necator (strain ATCC 17699 / DSM 428 / KCTC 22496 / NCIMB 10442 / H16 / Stanier 337) (Ralstonia eutropha).